A 146-amino-acid polypeptide reads, in one-letter code: D-aminoacyl-tRNA deacylase (146 aa).

The short motif at 137–138 (GP) is the Gly-cisPro motif, important for rejection of L-amino acids element.

It belongs to the DTD family. In terms of assembly, homodimer.

The protein localises to the cytoplasm. It carries out the reaction glycyl-tRNA(Ala) + H2O = tRNA(Ala) + glycine + H(+). The enzyme catalyses a D-aminoacyl-tRNA + H2O = a tRNA + a D-alpha-amino acid + H(+). An aminoacyl-tRNA editing enzyme that deacylates mischarged D-aminoacyl-tRNAs. Also deacylates mischarged glycyl-tRNA(Ala), protecting cells against glycine mischarging by AlaRS. Acts via tRNA-based rather than protein-based catalysis; rejects L-amino acids rather than detecting D-amino acids in the active site. By recycling D-aminoacyl-tRNA to D-amino acids and free tRNA molecules, this enzyme counteracts the toxicity associated with the formation of D-aminoacyl-tRNA entities in vivo and helps enforce protein L-homochirality. The polypeptide is D-aminoacyl-tRNA deacylase (Bacillus cereus (strain B4264)).